Consider the following 285-residue polypeptide: Acetyl-coenzyme A carboxylase carboxyl transferase subunit beta (285 aa).

The 257-residue stretch at 29-285 folds into the CoA carboxyltransferase N-terminal domain; it reads IMTKCPKCKK…ILKIHQEVTK (257 aa). Zn(2+) is bound by residues Cys33, Cys36, Cys52, and Cys55. Residues 33–55 form a C4-type zinc finger; that stretch reads CPKCKKIMYTKELAENLNVCFNC.

The protein belongs to the AccD/PCCB family. In terms of assembly, acetyl-CoA carboxylase is a heterohexamer composed of biotin carboxyl carrier protein (AccB), biotin carboxylase (AccC) and two subunits each of ACCase subunit alpha (AccA) and ACCase subunit beta (AccD). It depends on Zn(2+) as a cofactor.

It localises to the cytoplasm. The catalysed reaction is N(6)-carboxybiotinyl-L-lysyl-[protein] + acetyl-CoA = N(6)-biotinyl-L-lysyl-[protein] + malonyl-CoA. The protein operates within lipid metabolism; malonyl-CoA biosynthesis; malonyl-CoA from acetyl-CoA: step 1/1. Its function is as follows. Component of the acetyl coenzyme A carboxylase (ACC) complex. Biotin carboxylase (BC) catalyzes the carboxylation of biotin on its carrier protein (BCCP) and then the CO(2) group is transferred by the transcarboxylase to acetyl-CoA to form malonyl-CoA. The polypeptide is Acetyl-coenzyme A carboxylase carboxyl transferase subunit beta (Staphylococcus aureus (strain Mu3 / ATCC 700698)).